A 503-amino-acid polypeptide reads, in one-letter code: Aromatase (503 aa).

The next 3 membrane-spanning stretches (helical) occupy residues Glu19–Trp39, Gly51–Gly71, and Met303–Ala323. Residues Asp309 and Met374 each contribute to the substrate site. Cys437 provides a ligand contact to heme.

It belongs to the cytochrome P450 family. It depends on heme as a cofactor.

It localises to the endoplasmic reticulum membrane. Its subcellular location is the microsome membrane. It carries out the reaction testosterone + 3 reduced [NADPH--hemoprotein reductase] + 3 O2 = 17beta-estradiol + formate + 3 oxidized [NADPH--hemoprotein reductase] + 4 H2O + 4 H(+). The enzyme catalyses androst-4-ene-3,17-dione + 3 reduced [NADPH--hemoprotein reductase] + 3 O2 = estrone + formate + 3 oxidized [NADPH--hemoprotein reductase] + 4 H2O + 4 H(+). It catalyses the reaction androst-4-ene-3,17-dione + reduced [NADPH--hemoprotein reductase] + O2 = 19-hydroxyandrost-4-ene-3,17-dione + oxidized [NADPH--hemoprotein reductase] + H2O + H(+). The catalysed reaction is 19-hydroxyandrost-4-ene-3,17-dione + reduced [NADPH--hemoprotein reductase] + O2 = 19-oxo-androst-4-ene-3,17-dione + oxidized [NADPH--hemoprotein reductase] + 2 H2O + H(+). It carries out the reaction 19-oxo-androst-4-ene-3,17-dione + reduced [NADPH--hemoprotein reductase] + O2 = estrone + formate + oxidized [NADPH--hemoprotein reductase] + H2O + 2 H(+). The enzyme catalyses estrone + reduced [NADPH--hemoprotein reductase] + O2 = 2-hydroxyestrone + oxidized [NADPH--hemoprotein reductase] + H2O + H(+). It catalyses the reaction 17beta-hydroxy-5alpha-androstan-3-one + reduced [NADPH--hemoprotein reductase] + O2 = 17beta,19-dihydroxy-3-oxo-5alpha-androstanone + oxidized [NADPH--hemoprotein reductase] + H2O + H(+). The catalysed reaction is 17beta,19-dihydroxy-3-oxo-5alpha-androstanone + reduced [NADPH--hemoprotein reductase] + O2 = 17beta-hydroxy-3,19-dioxo-5alpha-androstanone + oxidized [NADPH--hemoprotein reductase] + 2 H2O + H(+). It carries out the reaction 17beta-hydroxy-3,19-dioxo-5alpha-androstanone + reduced [NADPH--hemoprotein reductase] + O2 = 17beta-hydroxy-3-oxo-19-nor-5alpha-androst-1-ene + formate + oxidized [NADPH--hemoprotein reductase] + H2O + 2 H(+). It functions in the pathway steroid hormone biosynthesis. Functionally, a cytochrome P450 monooxygenase that catalyzes the conversion of C19 androgens, androst-4-ene-3,17-dione (androstenedione) and testosterone to the C18 estrogens, estrone and estradiol, respectively. Catalyzes three successive oxidations of C19 androgens: two conventional oxidations at C19 yielding 19-hydroxy and 19-oxo/19-aldehyde derivatives, followed by a third oxidative aromatization step that involves C1-beta hydrogen abstraction combined with cleavage of the C10-C19 bond to yield a phenolic A ring and formic acid. Alternatively, the third oxidative reaction yields a 19-norsteroid and formic acid. Converts dihydrotestosterone to delta1,10-dehydro 19-nordihydrotestosterone and may play a role in homeostasis of this potent androgen. Also displays 2-hydroxylase activity toward estrone. Mechanistically, uses molecular oxygen inserting one oxygen atom into a substrate, and reducing the second into a water molecule, with two electrons provided by NADPH via cytochrome P450 reductase (CPR; NADPH-ferrihemoprotein reductase). This chain is Aromatase (CYP19A1), found in Canis lupus familiaris (Dog).